The sequence spans 697 residues: Sialidase B (697 aa).

Residues 1–29 (MNKRGLYSKLGISVVGISLLMGVPTLIHA) form the signal peptide. Arginine 245 provides a ligand contact to substrate. The active-site Proton acceptor is aspartate 270. 3 BNR repeats span residues 280-291 (SYSDDNGKTWSE), 462-473 (TTSQNRGESWEQ), and 517-528 (LISDDSGQTWKK). Residue glutamate 541 is part of the active site. Arginine 557 is a binding site for substrate. The stretch at 566 to 577 (MTSRDSGETWSK) is one BNR 4 repeat. Substrate is bound at residue arginine 619. Residue tyrosine 653 is the Nucleophile of the active site.

The protein belongs to the glycosyl hydrolase 33 family.

The catalysed reaction is Hydrolysis of alpha-(2-&gt;3)-, alpha-(2-&gt;6)-, alpha-(2-&gt;8)- glycosidic linkages of terminal sialic acid residues in oligosaccharides, glycoproteins, glycolipids, colominic acid and synthetic substrates.. This Streptococcus pneumoniae serotype 4 (strain ATCC BAA-334 / TIGR4) protein is Sialidase B (nanB).